The primary structure comprises 166 residues: uncharacterized protein (166 aa).

Functionally, this protein may be involved in virus assembly. Essential for virus function. This is an uncharacterized protein from Sulfolobus spindle-shape virus 1 (SSV1).